Here is a 294-residue protein sequence, read N- to C-terminus: NAD kinase (294 aa).

Asp74 functions as the Proton acceptor in the catalytic mechanism. Residues 74–75, 148–149, His159, Arg176, Asp178, 189–194, and Gln249 each bind NAD(+); these read DG, NE, and TAYSLS.

Belongs to the NAD kinase family. A divalent metal cation serves as cofactor.

Its subcellular location is the cytoplasm. The enzyme catalyses NAD(+) + ATP = ADP + NADP(+) + H(+). In terms of biological role, involved in the regulation of the intracellular balance of NAD and NADP, and is a key enzyme in the biosynthesis of NADP. Catalyzes specifically the phosphorylation on 2'-hydroxyl of the adenosine moiety of NAD to yield NADP. In Vibrio vulnificus (strain YJ016), this protein is NAD kinase.